Consider the following 87-residue polypeptide: Small ribosomal subunit protein uS19 (87 aa).

It belongs to the universal ribosomal protein uS19 family.

Its function is as follows. Protein S19 forms a complex with S13 that binds strongly to the 16S ribosomal RNA. In Mesoplasma florum (strain ATCC 33453 / NBRC 100688 / NCTC 11704 / L1) (Acholeplasma florum), this protein is Small ribosomal subunit protein uS19.